A 149-amino-acid chain; its full sequence is D-aminoacyl-tRNA deacylase (149 aa).

The Gly-cisPro motif, important for rejection of L-amino acids signature appears at 137–138; it reads GP.

This sequence belongs to the DTD family. As to quaternary structure, homodimer.

It is found in the cytoplasm. It carries out the reaction glycyl-tRNA(Ala) + H2O = tRNA(Ala) + glycine + H(+). The catalysed reaction is a D-aminoacyl-tRNA + H2O = a tRNA + a D-alpha-amino acid + H(+). Functionally, an aminoacyl-tRNA editing enzyme that deacylates mischarged D-aminoacyl-tRNAs. Also deacylates mischarged glycyl-tRNA(Ala), protecting cells against glycine mischarging by AlaRS. Acts via tRNA-based rather than protein-based catalysis; rejects L-amino acids rather than detecting D-amino acids in the active site. By recycling D-aminoacyl-tRNA to D-amino acids and free tRNA molecules, this enzyme counteracts the toxicity associated with the formation of D-aminoacyl-tRNA entities in vivo and helps enforce protein L-homochirality. The polypeptide is D-aminoacyl-tRNA deacylase (Geobacter sp. (strain M21)).